The sequence spans 753 residues: A-kinase anchor protein 200 (753 aa).

Disordered regions lie at residues 1–345 (MGKA…QIEA), 462–482 (VETRSSSPPPPLPKSPPPSRV), 531–604 (TEQE…IDPA), 620–641 (VEKETGSISSNVAESSSVSDEQ), and 658–684 (VEETTEQETSDQQVISEEAHSDNDKEN). Residue G2 is the site of N-myristoyl glycine attachment. Basic and acidic residues-rich tracts occupy residues 8–38 (RSIDITTDPKKVGEGDEVAGKVEKIDVDQKT) and 59–77 (AVEKKETEEHSENDKDLTT). Over residues 81–93 (AAVAEGGDAVAET) the composition is skewed to low complexity. The tract at residues 119–148 (KSKSKKDKVKKKWSFRSISFGKKDKQKPAK) is F-actin binding. A compositionally biased stretch (basic residues) spans 120–132 (SKSKKDKVKKKWS). S132, S135, and S137 each carry phosphoserine. A compositionally biased stretch (basic and acidic residues) spans 139 to 151 (GKKDKQKPAKSEE). Residues 152-181 (ATSPTSGTTSPTTAEAEAAPAGDAAVAEPS) are compositionally biased toward low complexity. Over residues 216–227 (EQEKQANGETEK) the composition is skewed to basic and acidic residues. A compositionally biased stretch (low complexity) spans 246 to 262 (EPATVTATESNTTATEE). Residues 345–725 (ASSEVIETVT…AEQEGESNNK (381 aa)) form an interaction with PKA-R2 region. Over residues 468–480 (SPPPPLPKSPPPS) the composition is skewed to pro residues. The segment covering 532–544 (EQEKQQEEAKVDS) has biased composition (basic and acidic residues). Over residues 545 to 561 (VPETIEESSSTVVVEEV) the composition is skewed to low complexity. The span at 578 to 594 (DVQKPIEDQDTPDEKES) shows a compositional bias: basic and acidic residues. Low complexity predominate over residues 626-638 (SISSNVAESSSVS). A compositionally biased stretch (basic and acidic residues) spans 674–684 (EEAHSDNDKEN).

In terms of assembly, homodimer. Interacts with Cam; interaction is calcium-dependent and is inhibited by PKC-mediated phosphorylation of Akap200. Interacts with N/Notch; the interaction stabilizes N/Notch protein levels by preventing Cbl-mediated ubiquitination and subsequent lysosomal degradation of N/Notch. Interacts with Pka-R2. Binds to F-actin; interaction is independent of myristoylation, but is inhibited by Akap200 phosphorylation and Cam binding. Isoform B: Does not bind to Pka-R2. Myristoylated; myristoylation promotes accumulation at the cell periphery. In terms of processing, phosphorylated; phosphorylation prevents binding to F-actin and Cam. In terms of tissue distribution, detected in the brain in both neurons and glia (including perineurial glia); specifically in the neuronal nuclei in the cortex and synaptic neuropil (at protein level). Detected in germline cells, somatic follicle cells and outer rim of the ring canals during oogenesis (at protein level). Isoform A: Detected in the adult (at protein level). Isoform B: Detected in the adult with higher levels in the head (at protein level).

The protein localises to the cytoplasm. It localises to the cytosol. It is found in the cell membrane. The protein resides in the cytoskeleton. In terms of biological role, scaffolding protein involved in the regulation of PKA signaling and anchoring to the actin cytoskeleton integrating signals propagated by cAMP, diacylglycerol and calcium. Contributes to the maintenance and regulation of cytoskeletal structures in germline via PKA-mediated signaling. As part of ethanol response in the glia, mediates ethanol-induced structural remodeling of actin cytoskeleton and perineurial membrane topology by anchoring PKA to the membrane of perineurial glia. In specific tissues such as eye and thorax, promotes N/Notch protein stability by inhibiting Cbl-mediated ubiquitination and lysosomal degradation pathway of N/Notch in a PKA-independent way. In the circadian brain neurons evening cells (E-cells), might have a role in circadian pacemaker synchronization by playing a redundant role in signaling downstream of the G protein-couple receptor Pdfr. This Drosophila melanogaster (Fruit fly) protein is A-kinase anchor protein 200.